The chain runs to 229 residues: Potassium/proton antiporter CemA (229 aa).

3 consecutive transmembrane segments (helical) span residues 7-27 (FTPLLYLVSIVFLPWWISLLF), 107-127 (ILHFSTNIICFIILSGYSILG), and 189-209 (IISGLVSTFPVILDTILKYWI).

Belongs to the CemA family.

The protein localises to the plastid. It localises to the chloroplast inner membrane. It catalyses the reaction K(+)(in) + H(+)(out) = K(+)(out) + H(+)(in). Its function is as follows. Contributes to K(+)/H(+) antiport activity by supporting proton efflux to control proton extrusion and homeostasis in chloroplasts in a light-dependent manner to modulate photosynthesis. Prevents excessive induction of non-photochemical quenching (NPQ) under continuous-light conditions. Indirectly promotes efficient inorganic carbon uptake into chloroplasts. The protein is Potassium/proton antiporter CemA of Helianthus annuus (Common sunflower).